The chain runs to 628 residues: 1-deoxy-D-xylulose-5-phosphate synthase (628 aa).

Residues histidine 72 and glycine 113–serine 115 contribute to the thiamine diphosphate site. Mg(2+) is bound at residue aspartate 144. Residues glycine 145–alanine 146, asparagine 173, tyrosine 284, and glutamate 363 each bind thiamine diphosphate. Asparagine 173 contacts Mg(2+).

This sequence belongs to the transketolase family. DXPS subfamily. As to quaternary structure, homodimer. Mg(2+) serves as cofactor. The cofactor is thiamine diphosphate.

It catalyses the reaction D-glyceraldehyde 3-phosphate + pyruvate + H(+) = 1-deoxy-D-xylulose 5-phosphate + CO2. The protein operates within metabolic intermediate biosynthesis; 1-deoxy-D-xylulose 5-phosphate biosynthesis; 1-deoxy-D-xylulose 5-phosphate from D-glyceraldehyde 3-phosphate and pyruvate: step 1/1. Its function is as follows. Catalyzes the acyloin condensation reaction between C atoms 2 and 3 of pyruvate and glyceraldehyde 3-phosphate to yield 1-deoxy-D-xylulose-5-phosphate (DXP). The polypeptide is 1-deoxy-D-xylulose-5-phosphate synthase (Brevibacillus brevis (strain 47 / JCM 6285 / NBRC 100599)).